We begin with the raw amino-acid sequence, 366 residues long: Ribosomal RNA small subunit methyltransferase H 1 (366 aa).

The tract at residues 1–46 is disordered; that stretch reads MADQNINKNEKVLTGQPTENQEPVHKRRERYKGTHPKTFKEKYKER. Residues 25–37 show a composition bias toward basic residues; the sequence is HKRRERYKGTHPK. S-adenosyl-L-methionine is bound by residues 97–99, D117, F147, D166, and Q173; that span reads GGH.

The protein belongs to the methyltransferase superfamily. RsmH family.

The protein localises to the cytoplasm. The catalysed reaction is cytidine(1402) in 16S rRNA + S-adenosyl-L-methionine = N(4)-methylcytidine(1402) in 16S rRNA + S-adenosyl-L-homocysteine + H(+). Specifically methylates the N4 position of cytidine in position 1402 (C1402) of 16S rRNA. The chain is Ribosomal RNA small subunit methyltransferase H 1 from Lachnoclostridium phytofermentans (strain ATCC 700394 / DSM 18823 / ISDg) (Clostridium phytofermentans).